The chain runs to 115 residues: uncharacterized protein (115 aa).

Residues 90 to 100 show a composition bias toward basic residues; sequence THFGRPATRRR. A disordered region spans residues 90 to 115; it reads THFGRPATRRRPLGEREVNPSARSLG.

This is an uncharacterized protein from Saccharomyces cerevisiae (strain ATCC 204508 / S288c) (Baker's yeast).